The primary structure comprises 156 residues: 6,7-dimethyl-8-ribityllumazine synthase (156 aa).

5-amino-6-(D-ribitylamino)uracil is bound by residues Phe-22, 57–59, and 81–83; these read AYE and TVI. 86–87 is a (2S)-2-hydroxy-3-oxobutyl phosphate binding site; the sequence is GT. The active-site Proton donor is the His-89. Phe-114 provides a ligand contact to 5-amino-6-(D-ribitylamino)uracil. (2S)-2-hydroxy-3-oxobutyl phosphate is bound at residue Arg-128.

The protein belongs to the DMRL synthase family. In terms of assembly, forms an icosahedral capsid composed of 60 subunits, arranged as a dodecamer of pentamers.

It catalyses the reaction (2S)-2-hydroxy-3-oxobutyl phosphate + 5-amino-6-(D-ribitylamino)uracil = 6,7-dimethyl-8-(1-D-ribityl)lumazine + phosphate + 2 H2O + H(+). The protein operates within cofactor biosynthesis; riboflavin biosynthesis; riboflavin from 2-hydroxy-3-oxobutyl phosphate and 5-amino-6-(D-ribitylamino)uracil: step 1/2. Its function is as follows. Catalyzes the formation of 6,7-dimethyl-8-ribityllumazine by condensation of 5-amino-6-(D-ribitylamino)uracil with 3,4-dihydroxy-2-butanone 4-phosphate. This is the penultimate step in the biosynthesis of riboflavin. The chain is 6,7-dimethyl-8-ribityllumazine synthase from Yersinia enterocolitica serotype O:8 / biotype 1B (strain NCTC 13174 / 8081).